The chain runs to 282 residues: Phycocyanobilin lyase subunit beta (282 aa).

This sequence belongs to the CpcE/RpcE/PecE family. As to quaternary structure, cpcE and CpcF associate to form a lyase.

Required for the chromophorylation of the CpcA gene product. The sequence is that of Phycocyanobilin lyase subunit beta (cpcF1) from Pseudanabaena tenuis (strain PCC 7409).